Here is a 1807-residue protein sequence, read N- to C-terminus: Vitellogenin-A2 (1807 aa).

A signal peptide spans methionine 1–serine 15. The Vitellogenin domain occupies phenylalanine 24–isoleucine 664. Residues threonine 953–alanine 974 are disordered. Residue asparagine 1094 is glycosylated (N-linked (GlcNAc...) asparagine). The segment at glutamate 1095–glutamate 1320 is disordered. Basic residues predominate over residues serine 1101 to asparagine 1111. A compositionally biased stretch (basic and acidic residues) spans arginine 1112–lysine 1123. A compositionally biased stretch (low complexity) spans serine 1126–serine 1163. The segment covering glutamine 1187–lysine 1198 has biased composition (basic and acidic residues). The segment covering serine 1205–serine 1232 has biased composition (low complexity). A compositionally biased stretch (basic and acidic residues) spans glutamate 1233–glutamine 1247. Low complexity-rich tracts occupy residues serine 1263 to glutamate 1276 and serine 1309 to glutamate 1320. Positions glycine 1536–serine 1714 constitute a VWFD domain. Intrachain disulfides connect cysteine 1538/cysteine 1677 and cysteine 1561/cysteine 1713.

As to expression, produced by the liver, secreted into the blood and then sequestered by receptor mediated endocytosis into growing oocytes, where it is generally cleaved, giving rise to the respective yolk components.

Functionally, precursor of the major egg-yolk proteins that are sources of nutrients during early development of oviparous organisms. This chain is Vitellogenin-A2, found in Xenopus laevis (African clawed frog).